Consider the following 544-residue polypeptide: CTP synthase (544 aa).

Residues 1 to 265 (MTKFIFVTGG…DNIITEQLQL (265 aa)) form an amidoligase domain region. Serine 13 is a binding site for CTP. UTP is bound at residue serine 13. ATP contacts are provided by residues 14-19 (SLGKGI) and aspartate 71. Mg(2+) is bound by residues aspartate 71 and glutamate 139. CTP-binding positions include 146–148 (DIE), 186–191 (KTKPTQ), and lysine 222. Residues 186-191 (KTKPTQ) and lysine 222 contribute to the UTP site. Residues 290–544 (KIAMVGKYVD…VKAALNNKKA (255 aa)) enclose the Glutamine amidotransferase type-1 domain. Glycine 353 contacts L-glutamine. Cysteine 380 (nucleophile; for glutamine hydrolysis) is an active-site residue. L-glutamine is bound by residues 381–384 (LGMQ), glutamate 404, and arginine 471. Active-site residues include histidine 517 and glutamate 519.

It belongs to the CTP synthase family. As to quaternary structure, homotetramer.

It carries out the reaction UTP + L-glutamine + ATP + H2O = CTP + L-glutamate + ADP + phosphate + 2 H(+). The enzyme catalyses L-glutamine + H2O = L-glutamate + NH4(+). The catalysed reaction is UTP + NH4(+) + ATP = CTP + ADP + phosphate + 2 H(+). It functions in the pathway pyrimidine metabolism; CTP biosynthesis via de novo pathway; CTP from UDP: step 2/2. Allosterically activated by GTP, when glutamine is the substrate; GTP has no effect on the reaction when ammonia is the substrate. The allosteric effector GTP functions by stabilizing the protein conformation that binds the tetrahedral intermediate(s) formed during glutamine hydrolysis. Inhibited by the product CTP, via allosteric rather than competitive inhibition. In terms of biological role, catalyzes the ATP-dependent amination of UTP to CTP with either L-glutamine or ammonia as the source of nitrogen. Regulates intracellular CTP levels through interactions with the four ribonucleotide triphosphates. This chain is CTP synthase, found in Neisseria gonorrhoeae (strain ATCC 700825 / FA 1090).